A 717-amino-acid chain; its full sequence is Putative amino acid transporter AAT1 (717 aa).

The span at 1–10 (MREGAFDASR) shows a compositional bias: basic and acidic residues. The tract at residues 1–88 (MREGAFDASR…DRAQTDSRQE (88 aa)) is disordered. Residues 16-25 (QRPSSLSTAQ) are compositionally biased toward polar residues. Over residues 26-53 (PPSDSRPPSSSSPPSSSSSSSSASSSSP) the composition is skewed to low complexity. The span at 74–88 (SAEKMDRAQTDSRQE) shows a compositional bias: basic and acidic residues. 8 helical membrane passes run 124–143 (VLTL…PYAM), 149–170 (LIGL…YILM), 196–216 (AVDA…LVFL), 236–253 (HRAA…PLSV), 265–283 (FFPV…YRSL), 303–320 (FKSF…INVC), 341–358 (AALL…LGYL), and 378–402 (LMHV…IPTV). The disordered stretch occupies residues 462–602 (GDAEYGGAEA…REEREEREGQ (141 aa)). A compositionally biased stretch (low complexity) spans 463 to 477 (DAEYGGAEAGEATRG). The segment covering 497-519 (ARNRDRSRLHADSERSAGDREGS) has biased composition (basic and acidic residues). Positions 547 to 558 (GSSSASSRSVDS) are enriched in low complexity. A compositionally biased stretch (basic and acidic residues) spans 584–602 (SGDREAREEREEREEREGQ). 3 helical membrane-spanning segments follow: residues 622 to 638 (VCVA…ALVL), 644 to 669 (VVGL…YAGI), and 681 to 702 (LLMV…IIIL).

The protein belongs to the amino acid/polyamine transporter 2 family.

It localises to the vacuole membrane. Putative amino acid transporter. Probably transports arginine. Involved in maintaining the osmotic homeostasis of the digestive vacuole. Required for extracellular parasite survival and bradyzoite differentiation. In Toxoplasma gondii (strain ATCC 50611 / Me49), this protein is Putative amino acid transporter AAT1.